We begin with the raw amino-acid sequence, 353 residues long: Putative glycosyltransferase TagX (353 aa).

This sequence belongs to the glycosyltransferase 2 family.

The protein is Putative glycosyltransferase TagX (tagX) of Staphylococcus aureus (strain COL).